The sequence spans 145 residues: uncharacterized protein (145 aa).

This is an uncharacterized protein from Frog virus 3 (isolate Goorha) (FV-3).